The sequence spans 188 residues: Ribosome-recycling factor (188 aa).

It belongs to the RRF family.

It is found in the cytoplasm. Its function is as follows. Responsible for the release of ribosomes from messenger RNA at the termination of protein biosynthesis. May increase the efficiency of translation by recycling ribosomes from one round of translation to another. This is Ribosome-recycling factor from Caulobacter sp. (strain K31).